The sequence spans 156 residues: Small ribosomal subunit protein uS7 (156 aa).

This sequence belongs to the universal ribosomal protein uS7 family. As to quaternary structure, part of the 30S ribosomal subunit. Contacts proteins S9 and S11.

In terms of biological role, one of the primary rRNA binding proteins, it binds directly to 16S rRNA where it nucleates assembly of the head domain of the 30S subunit. Is located at the subunit interface close to the decoding center, probably blocks exit of the E-site tRNA. The sequence is that of Small ribosomal subunit protein uS7 from Roseobacter denitrificans (strain ATCC 33942 / OCh 114) (Erythrobacter sp. (strain OCh 114)).